We begin with the raw amino-acid sequence, 428 residues long: Glutamate-1-semialdehyde 2,1-aminomutase (428 aa).

The residue at position 267 (lysine 267) is an N6-(pyridoxal phosphate)lysine.

This sequence belongs to the class-III pyridoxal-phosphate-dependent aminotransferase family. HemL subfamily. As to quaternary structure, homodimer. Pyridoxal 5'-phosphate serves as cofactor.

The protein resides in the cytoplasm. The catalysed reaction is (S)-4-amino-5-oxopentanoate = 5-aminolevulinate. Its pathway is porphyrin-containing compound metabolism; protoporphyrin-IX biosynthesis; 5-aminolevulinate from L-glutamyl-tRNA(Glu): step 2/2. This Pelobacter propionicus (strain DSM 2379 / NBRC 103807 / OttBd1) protein is Glutamate-1-semialdehyde 2,1-aminomutase.